A 181-amino-acid chain; its full sequence is Protoporphyrinogen IX dehydrogenase [quinone] (181 aa).

One can recognise a Flavodoxin-like domain in the interval 3–172; sequence TLILFSTRDG…QVANFAREIA (170 aa). FMN contacts are provided by residues 9–13 and 84–152; these read TRDGQ and FYSV…ETDT.

It belongs to the HemG family. FMN serves as cofactor.

The protein resides in the cell inner membrane. It carries out the reaction protoporphyrinogen IX + 3 a menaquinone = protoporphyrin IX + 3 a menaquinol. The catalysed reaction is protoporphyrinogen IX + 3 a ubiquinone = protoporphyrin IX + 3 a ubiquinol. The enzyme catalyses protoporphyrinogen IX + 3 a quinone = protoporphyrin IX + 3 a quinol. It functions in the pathway porphyrin-containing compound metabolism; protoporphyrin-IX biosynthesis; protoporphyrin-IX from protoporphyrinogen-IX: step 1/1. Its function is as follows. Catalyzes the 6-electron oxidation of protoporphyrinogen IX to form protoporphyrin IX; under anaerobic conditions uses menaquinone as an electron acceptor, under aerobic condition uses ubiquinone as an electron acceptor. The chain is Protoporphyrinogen IX dehydrogenase [quinone] from Escherichia coli O157:H7.